The sequence spans 431 residues: uncharacterized protein (431 aa).

2 consecutive transmembrane segments (helical) span residues 42–62 (LLIG…IGCL) and 74–94 (VMIF…ATML). Asparagine 105 carries N-linked (GlcNAc...) asparagine; by host glycosylation. A run of 5 helical transmembrane segments spans residues 111-131 (LVLF…LFLI), 153-173 (AGVA…AAVP), 202-222 (MWFL…ELAY), 236-256 (VCTF…FRVL), and 279-299 (ATRT…IAFF).

The protein localises to the membrane. This is an uncharacterized protein from Homo sapiens (Human).